Here is a 459-residue protein sequence, read N- to C-terminus: Putrescine aminotransferase (459 aa).

Residues 150-151 (GT) and Q274 each bind pyridoxal 5'-phosphate. K300 bears the N6-(pyridoxal phosphate)lysine mark. T332 lines the pyridoxal 5'-phosphate pocket.

This sequence belongs to the class-III pyridoxal-phosphate-dependent aminotransferase family. Putrescine aminotransferase subfamily. It depends on pyridoxal 5'-phosphate as a cofactor.

It catalyses the reaction an alkane-alpha,omega-diamine + 2-oxoglutarate = an omega-aminoaldehyde + L-glutamate. The enzyme catalyses putrescine + 2-oxoglutarate = 1-pyrroline + L-glutamate + H2O. The catalysed reaction is cadaverine + 2-oxoglutarate = 5-aminopentanal + L-glutamate. Its pathway is amine and polyamine degradation; putrescine degradation; 4-aminobutanal from putrescine (transaminase route): step 1/1. Its function is as follows. Catalyzes the aminotransferase reaction from putrescine to 2-oxoglutarate, leading to glutamate and 4-aminobutanal, which spontaneously cyclizes to form 1-pyrroline. This is the first step in one of two pathways for putrescine degradation, where putrescine is converted into 4-aminobutanoate (gamma-aminobutyrate or GABA) via 4-aminobutanal. Also functions as a cadaverine transaminase in a a L-lysine degradation pathway to succinate that proceeds via cadaverine, glutarate and L-2-hydroxyglutarate. The protein is Putrescine aminotransferase of Shigella flexneri serotype 5b (strain 8401).